Consider the following 498-residue polypeptide: Aspartyl/glutamyl-tRNA(Asn/Gln) amidotransferase subunit B (498 aa).

Belongs to the GatB/GatE family. GatB subfamily. Heterotrimer of A, B and C subunits.

The catalysed reaction is L-glutamyl-tRNA(Gln) + L-glutamine + ATP + H2O = L-glutaminyl-tRNA(Gln) + L-glutamate + ADP + phosphate + H(+). The enzyme catalyses L-aspartyl-tRNA(Asn) + L-glutamine + ATP + H2O = L-asparaginyl-tRNA(Asn) + L-glutamate + ADP + phosphate + 2 H(+). In terms of biological role, allows the formation of correctly charged Asn-tRNA(Asn) or Gln-tRNA(Gln) through the transamidation of misacylated Asp-tRNA(Asn) or Glu-tRNA(Gln) in organisms which lack either or both of asparaginyl-tRNA or glutaminyl-tRNA synthetases. The reaction takes place in the presence of glutamine and ATP through an activated phospho-Asp-tRNA(Asn) or phospho-Glu-tRNA(Gln). In Erythrobacter litoralis (strain HTCC2594), this protein is Aspartyl/glutamyl-tRNA(Asn/Gln) amidotransferase subunit B.